The primary structure comprises 272 residues: MNEWTPIAKKYDPLKAGSIDGTDEEPHDRAVLRAMLSRYVPNKGVTGDPHLTLFVSRLSPQTTEEKLKEVFSRYGDIKRIRLVRDFITGFSKGYAFIEYKQENAIMKAHRDANKLVIDQREVFVDFELERNLKGWIPRRFGGGFGGKKESGQLRFGGRDRPFRKPINLPVFPHQFNSESRGEKRHRSRSRDRSHDWRGQRRDYGRDRDRGIRRPEKERPYTKDDKEQNAEHTKRERSREQAKNDKDKEKKDSKRERSRERDYRKHRSDEHNR.

The 79-residue stretch at 51–129 (LTLFVSRLSP…REVFVDFELE (79 aa)) folds into the RRM domain. Composition is skewed to basic and acidic residues over residues 146–162 (GKKE…DRPF) and 190–272 (RDRS…EHNR). Positions 146-272 (GKKESGQLRF…RKHRSDEHNR (127 aa)) are disordered. Residues 221–258 (TKDDKEQNAEHTKRERSREQAKNDKDKEKKDSKRERSR) are a coiled coil.

The protein localises to the nucleus. This Xenopus laevis (African clawed frog) protein is U11/U12 small nuclear ribonucleoprotein 35 kDa protein (snrnp35).